The chain runs to 506 residues: Maturase K (506 aa).

This sequence belongs to the intron maturase 2 family. MatK subfamily.

It localises to the plastid. The protein resides in the chloroplast. Its function is as follows. Usually encoded in the trnK tRNA gene intron. Probably assists in splicing its own and other chloroplast group II introns. This chain is Maturase K, found in Sullivantia sullivantii (Sullivant's coolwort).